The primary structure comprises 420 residues: UDP-glucuronic acid decarboxylase 1 (420 aa).

M1 carries the post-translational modification N-acetylmethionine. Residues 1 to 19 are Cytoplasmic-facing; sequence MVSKGLLRLVSSVNRRRMK. Residues 20-40 form a helical; Signal-anchor for type II membrane protein membrane-spanning segment; it reads LLLGIALFAYAASVWGNFVNM. At 41 to 420 the chain is on the lumenal side; sequence RSIQENGELK…RVKKGRTRHS (380 aa). Residue T94 is modified to Phosphothreonine. Residues G98, F99, V100, D119, N120, F122, T123, G124, D144, and V145 each coordinate NAD(+). Residues L149 and Y150 each contribute to the UDP-alpha-D-glucuronate site. 2 residues coordinate NAD(+): L159 and S161. K177 contacts UDP-alpha-D-glucuronate. An NAD(+)-binding site is contributed by T178. N185, G188, K191, and R192 together coordinate UDP-alpha-D-glucuronate. A200, Y231, and K235 together coordinate NAD(+). The active-site Proton acceptor is the Y231. UDP-alpha-D-glucuronate contacts are provided by Y245, Q248, and E249. 3 residues coordinate NAD(+): T261, H267, and R272. N316 carries N-linked (GlcNAc...) asparagine glycosylation.

The protein belongs to the NAD(P)-dependent epimerase/dehydratase family. UDP-glucuronic acid decarboxylase subfamily. Homodimer and homotetramer. Interacts with AKT1. Requires NAD(+) as cofactor.

The protein resides in the golgi apparatus. It is found in the golgi stack membrane. The enzyme catalyses UDP-alpha-D-glucuronate + H(+) = UDP-alpha-D-xylose + CO2. It functions in the pathway nucleotide-sugar biosynthesis; UDP-alpha-D-xylose biosynthesis; UDP-alpha-D-xylose from UDP-alpha-D-glucuronate: step 1/1. Functionally, catalyzes the NAD-dependent decarboxylation of UDP-glucuronic acid to UDP-xylose. Necessary for the biosynthesis of the core tetrasaccharide in glycosaminoglycan biosynthesis. The chain is UDP-glucuronic acid decarboxylase 1 (Uxs1) from Mus musculus (Mouse).